The following is a 142-amino-acid chain: Large ribosomal subunit protein uL13 (142 aa).

This sequence belongs to the universal ribosomal protein uL13 family. Part of the 50S ribosomal subunit.

This protein is one of the early assembly proteins of the 50S ribosomal subunit, although it is not seen to bind rRNA by itself. It is important during the early stages of 50S assembly. This is Large ribosomal subunit protein uL13 from Histophilus somni (strain 129Pt) (Haemophilus somnus).